Consider the following 449-residue polypeptide: Probable glycine dehydrogenase (decarboxylating) subunit 1 (449 aa).

Belongs to the GcvP family. N-terminal subunit subfamily. In terms of assembly, the glycine cleavage system is composed of four proteins: P, T, L and H. In this organism, the P 'protein' is a heterodimer of two subunits.

The catalysed reaction is N(6)-[(R)-lipoyl]-L-lysyl-[glycine-cleavage complex H protein] + glycine + H(+) = N(6)-[(R)-S(8)-aminomethyldihydrolipoyl]-L-lysyl-[glycine-cleavage complex H protein] + CO2. Its function is as follows. The glycine cleavage system catalyzes the degradation of glycine. The P protein binds the alpha-amino group of glycine through its pyridoxal phosphate cofactor; CO(2) is released and the remaining methylamine moiety is then transferred to the lipoamide cofactor of the H protein. The polypeptide is Probable glycine dehydrogenase (decarboxylating) subunit 1 (Solibacter usitatus (strain Ellin6076)).